The chain runs to 88 residues: UPF0297 protein LAR_0520 (88 aa).

It belongs to the UPF0297 family.

This Limosilactobacillus reuteri subsp. reuteri (strain JCM 1112) (Lactobacillus reuteri) protein is UPF0297 protein LAR_0520.